The primary structure comprises 140 residues: Protein KRTCAP2 homolog (140 aa).

The next 4 membrane-spanning stretches (helical) occupy residues Leu-11–Cys-31, Leu-40–Val-60, Ala-74–Val-94, and Cys-98–Ile-118.

It belongs to the KRTCAP2 family. In terms of assembly, component of the oligosaccharyltransferase (OST) complex.

It is found in the membrane. Functionally, subunit of the oligosaccharyl transferase (OST) complex that catalyzes the initial transfer of a defined glycan (Glc(3)Man(9)GlcNAc(2) in eukaryotes) from the lipid carrier dolichol-pyrophosphate to an asparagine residue within an Asn-X-Ser/Thr consensus motif in nascent polypeptide chains, the first step in protein N-glycosylation. N-glycosylation occurs cotranslationally and the complex associates with the Sec61 complex at the channel-forming translocon complex that mediates protein translocation across the endoplasmic reticulum (ER). All subunits are required for a maximal enzyme activity. This chain is Protein KRTCAP2 homolog, found in Drosophila pseudoobscura pseudoobscura (Fruit fly).